Consider the following 171-residue polypeptide: Sorcin (171 aa).

EF-hand domains follow at residues 3–38 (MDTN…GLGT), 40–69 (LNIR…LGLF), 70–105 (KYVQ…FGYH), and 106–140 (LSPQ…LQTL). Residues aspartate 16, aspartate 18, serine 20, serine 22, glutamate 27, aspartate 53, aspartate 55, asparagine 57, threonine 59, glutamate 64, aspartate 83, aspartate 85, serine 87, serine 89, and glutamate 94 each contribute to the Ca(2+) site.

It is found in the cytoplasm. Its function is as follows. Calcium-binding protein. This Schistosoma japonicum (Blood fluke) protein is Sorcin.